The following is a 428-amino-acid chain: Sporulation kinase C (428 aa).

2 consecutive transmembrane segments (helical) span residues 8–28 (IISI…FYFI) and 36–56 (PVDI…AYYI). Positions 76-147 (LSEEKNRIMD…NTQIQNKASS (72 aa)) constitute a PAS domain. Positions 148 to 200 (GMFTAKYVTKNGTIFWGEVHYKLYYDRDDQFTGSLGTMSDITERKEAEDELIE) constitute a PAC domain. One can recognise a Histidine kinase domain in the interval 221–426 (GIAHEVRNPL…VFQVVLPLKS (206 aa)). Histidine 224 carries the post-translational modification Phosphohistidine; by autocatalysis.

Oligomerizes, probably forms homodimers; oligomerization is assisted by FloT. Interacts with FloT. Another study shows only rare colocalization with FloT or FloA membrane assemblies. KinC membrane assemblies are more mobile than FloT membrane assemblies.

The protein resides in the cell membrane. It localises to the membrane raft. The catalysed reaction is ATP + protein L-histidine = ADP + protein N-phospho-L-histidine.. In terms of biological role, phosphorylates the sporulation-regulatory protein Spo0A a transcription factor that also controls biofilm formation. Requires FloT and FloA for localization to DRMs and for activity. This is Sporulation kinase C from Bacillus subtilis (strain 168).